A 607-amino-acid polypeptide reads, in one-letter code: Terpenoid synthase 29 (607 aa).

The Mg(2+) site is built by aspartate 358, aspartate 362, asparagine 502, threonine 506, and glutamate 510. The DDXXD motif motif lies at 358-362; sequence DDTYD.

This sequence belongs to the terpene synthase family. Tpsa subfamily. Mg(2+) serves as cofactor. The cofactor is Mn(2+). In terms of tissue distribution, predominantly expressed in flowers but also in siliques, roots, leaves and stems.

It is found in the cytoplasm. Its pathway is secondary metabolite biosynthesis; terpenoid biosynthesis. The chain is Terpenoid synthase 29 (TPS29) from Arabidopsis thaliana (Mouse-ear cress).